Reading from the N-terminus, the 457-residue chain is Argininosuccinate lyase (457 aa).

This sequence belongs to the lyase 1 family. Argininosuccinate lyase subfamily.

The protein resides in the cytoplasm. It carries out the reaction 2-(N(omega)-L-arginino)succinate = fumarate + L-arginine. It functions in the pathway amino-acid biosynthesis; L-arginine biosynthesis; L-arginine from L-ornithine and carbamoyl phosphate: step 3/3. The polypeptide is Argininosuccinate lyase (Shigella flexneri serotype 5b (strain 8401)).